A 312-amino-acid chain; its full sequence is Porphobilinogen deaminase (312 aa).

Residue cysteine 241 is modified to S-(dipyrrolylmethanemethyl)cysteine.

Belongs to the HMBS family. Monomer. Dipyrromethane serves as cofactor.

The enzyme catalyses 4 porphobilinogen + H2O = hydroxymethylbilane + 4 NH4(+). It functions in the pathway porphyrin-containing compound metabolism; protoporphyrin-IX biosynthesis; coproporphyrinogen-III from 5-aminolevulinate: step 2/4. Its function is as follows. Tetrapolymerization of the monopyrrole PBG into the hydroxymethylbilane pre-uroporphyrinogen in several discrete steps. The polypeptide is Porphobilinogen deaminase (Aliarcobacter butzleri (strain RM4018) (Arcobacter butzleri)).